A 154-amino-acid chain; its full sequence is MQIILLEKLDNLGNKGDILFVKSGYARNFLIPYGKAIFATKDNIKFEINKKEELERELIKKISIAKTKCEKIKNIKSIVIPAQVGIEGKLFGSVGSRDIAKKLSELSNIKIKKHEIYFLNGALKHVGQHKVIFKPHHSVSITVEINIVSQDKDK.

It belongs to the bacterial ribosomal protein bL9 family.

Its function is as follows. Binds to the 23S rRNA. This Buchnera aphidicola subsp. Baizongia pistaciae (strain Bp) protein is Large ribosomal subunit protein bL9.